The sequence spans 260 residues: 5'-nucleotidase SurE (260 aa).

A divalent metal cation contacts are provided by D13, D14, S44, and N102.

It belongs to the SurE nucleotidase family. Requires a divalent metal cation as cofactor.

The protein resides in the cytoplasm. It catalyses the reaction a ribonucleoside 5'-phosphate + H2O = a ribonucleoside + phosphate. Functionally, nucleotidase that shows phosphatase activity on nucleoside 5'-monophosphates. This Christiangramia forsetii (strain DSM 17595 / CGMCC 1.15422 / KT0803) (Gramella forsetii) protein is 5'-nucleotidase SurE.